We begin with the raw amino-acid sequence, 737 residues long: 1,4-alpha-glucan branching enzyme GlgB (737 aa).

The Nucleophile role is filled by Asp419. The Proton donor role is filled by Glu472.

The protein belongs to the glycosyl hydrolase 13 family. GlgB subfamily. In terms of assembly, monomer.

The enzyme catalyses Transfers a segment of a (1-&gt;4)-alpha-D-glucan chain to a primary hydroxy group in a similar glucan chain.. It participates in glycan biosynthesis; glycogen biosynthesis. Its function is as follows. Catalyzes the formation of the alpha-1,6-glucosidic linkages in glycogen by scission of a 1,4-alpha-linked oligosaccharide from growing alpha-1,4-glucan chains and the subsequent attachment of the oligosaccharide to the alpha-1,6 position. In Cellvibrio japonicus (strain Ueda107) (Pseudomonas fluorescens subsp. cellulosa), this protein is 1,4-alpha-glucan branching enzyme GlgB.